The chain runs to 488 residues: E3 ubiquitin-protein ligase RNF8 (488 aa).

Residues 38–92 (VTIGRGLSVTYQLISKVCPLMISRSHCVLKQNPEGQWTIMDNKSLNGVWLNRERL) form the FHA domain. Residues 68–72 (QNPEG) form a required for interaction with PIWIL1 region. The disordered stretch occupies residues 141 to 164 (DQRMEKHKGSRTKRKFSSPGLENL). The segment covering 145 to 156 (EKHKGSRTKRKF) has biased composition (basic residues). Ser157 bears the Phosphoserine mark. The segment at 406–444 (CIICSEYFIEAVTLNCAHSFCSFCINEWMKRKVECPICR) adopts an RING-type zinc-finger fold.

It belongs to the RNF8 family. As to quaternary structure, homodimer. Forms a E2-E3 ubiquitin ligase complex composed of the RNF8 homodimer and a E2 heterodimer of UBE2N and UBE2V2. Interacts with class III E2s, including UBE2E1, UBE2E2, and UBE2E3 and with UBE2N. Interacts with RXRA. Interacts (via FHA domain) with ATM-phosphorylated MDC1. Interacts (via FHA domain) with 'Thr-4829' phosphorylated HERC2 (via C-terminus). Interacts with PIWIL1; leading to sequester RNF8 in the cytoplasm. Interacts with WRAP53/TCAB1. In terms of assembly, (Microbial infection) May interact with the L.monocytogenes protein actA; however, given these errors in the sequence (AJ242721), the relevance of the interaction with actA remains to be confirmed. Post-translationally, autoubiquitinated through 'Lys-48' and 'Lys-63' of ubiquitin. 'Lys-63' polyubiquitination is mediated by UBE2N. 'Lys-29'-type polyubiquitination is also observed, but it doesn't require its own functional RING-type zinc finger.

Its subcellular location is the nucleus. The protein resides in the cytoplasm. It localises to the midbody. The protein localises to the chromosome. It is found in the telomere. It catalyses the reaction S-ubiquitinyl-[E2 ubiquitin-conjugating enzyme]-L-cysteine + [acceptor protein]-L-lysine = [E2 ubiquitin-conjugating enzyme]-L-cysteine + N(6)-ubiquitinyl-[acceptor protein]-L-lysine.. Its pathway is protein modification; protein ubiquitination. Functionally, E3 ubiquitin-protein ligase that plays a key role in DNA damage signaling via 2 distinct roles: by mediating the 'Lys-63'-linked ubiquitination of histones H2A and H2AX and promoting the recruitment of DNA repair proteins at double-strand breaks (DSBs) sites, and by catalyzing 'Lys-48'-linked ubiquitination to remove target proteins from DNA damage sites. Following DNA DSBs, it is recruited to the sites of damage by ATM-phosphorylated MDC1 and catalyzes the 'Lys-63'-linked ubiquitination of histones H2A and H2AX, thereby promoting the formation of TP53BP1 and BRCA1 ionizing radiation-induced foci (IRIF). Also controls the recruitment of UIMC1-BRCC3 (RAP80-BRCC36) and PAXIP1/PTIP to DNA damage sites. Promotes the recruitment of NBN to DNA damage sites by catalyzing 'Lys-6'-linked ubiquitination of NBN. Also recruited at DNA interstrand cross-links (ICLs) sites and catalyzes 'Lys-63'-linked ubiquitination of histones H2A and H2AX, leading to recruitment of FAAP20 and Fanconi anemia (FA) complex, followed by interstrand cross-link repair. H2A ubiquitination also mediates the ATM-dependent transcriptional silencing at regions flanking DSBs in cis, a mechanism to avoid collision between transcription and repair intermediates. Promotes the formation of 'Lys-63'-linked polyubiquitin chains via interactions with the specific ubiquitin-conjugating UBE2N/UBC13 and ubiquitinates non-histone substrates such as PCNA. Substrates that are polyubiquitinated at 'Lys-63' are usually not targeted for degradation. Also catalyzes the formation of 'Lys-48'-linked polyubiquitin chains via interaction with the ubiquitin-conjugating UBE2L6/UBCH8, leading to degradation of substrate proteins such as CHEK2, JMJD2A/KDM4A and KU80/XRCC5: it is still unclear how the preference toward 'Lys-48'- versus 'Lys-63'-linked ubiquitination is regulated but it could be due to RNF8 ability to interact with specific E2 specific ligases. For instance, interaction with phosphorylated HERC2 promotes the association between RNF8 and UBE2N/UBC13 and favors the specific formation of 'Lys-63'-linked ubiquitin chains. Promotes non-homologous end joining (NHEJ) by promoting the 'Lys-48'-linked ubiquitination and degradation the of KU80/XRCC5. Following DNA damage, mediates the ubiquitination and degradation of JMJD2A/KDM4A in collaboration with RNF168, leading to unmask H4K20me2 mark and promote the recruitment of TP53BP1 at DNA damage sites. Following DNA damage, mediates the ubiquitination and degradation of POLD4/p12, a subunit of DNA polymerase delta. In the absence of POLD4, DNA polymerase delta complex exhibits higher proofreading activity. In addition to its function in damage signaling, also plays a role in higher-order chromatin structure by mediating extensive chromatin decondensation. Involved in the activation of ATM by promoting histone H2B ubiquitination, which indirectly triggers histone H4 'Lys-16' acetylation (H4K16ac), establishing a chromatin environment that promotes efficient activation of ATM kinase. Required in the testis, where it plays a role in the replacement of histones during spermatogenesis. At uncapped telomeres, promotes the joining of deprotected chromosome ends by inducing H2A ubiquitination and TP53BP1 recruitment, suggesting that it may enhance cancer development by aggravating telomere-induced genome instability in case of telomeric crisis. Promotes the assembly of RAD51 at DNA DSBs in the absence of BRCA1 and TP53BP1 Also involved in class switch recombination in immune system, via its role in regulation of DSBs repair. May be required for proper exit from mitosis after spindle checkpoint activation and may regulate cytokinesis. May play a role in the regulation of RXRA-mediated transcriptional activity. Not involved in RXRA ubiquitination by UBE2E2. In Mus musculus (Mouse), this protein is E3 ubiquitin-protein ligase RNF8.